A 265-amino-acid polypeptide reads, in one-letter code: Shikimate dehydrogenase (NADP(+)) (265 aa).

Shikimate is bound by residues 15–17 (SLS) and threonine 62. Catalysis depends on lysine 66, which acts as the Proton acceptor. 2 residues coordinate shikimate: asparagine 87 and aspartate 102. Residues 125-129 (GAGGA), 149-154 (NRTLEK), and leucine 209 each bind NADP(+). Tyrosine 211 serves as a coordination point for shikimate. An NADP(+)-binding site is contributed by glycine 233.

It belongs to the shikimate dehydrogenase family. Homodimer.

The enzyme catalyses shikimate + NADP(+) = 3-dehydroshikimate + NADPH + H(+). It functions in the pathway metabolic intermediate biosynthesis; chorismate biosynthesis; chorismate from D-erythrose 4-phosphate and phosphoenolpyruvate: step 4/7. Involved in the biosynthesis of the chorismate, which leads to the biosynthesis of aromatic amino acids. Catalyzes the reversible NADPH linked reduction of 3-dehydroshikimate (DHSA) to yield shikimate (SA). The sequence is that of Shikimate dehydrogenase (NADP(+)) from Legionella pneumophila (strain Corby).